Consider the following 100-residue polypeptide: Urease subunit gamma (100 aa).

Belongs to the urease gamma subunit family. In terms of assembly, heterotrimer of UreA (gamma), UreB (beta) and UreC (alpha) subunits. Three heterotrimers associate to form the active enzyme.

It localises to the cytoplasm. It carries out the reaction urea + 2 H2O + H(+) = hydrogencarbonate + 2 NH4(+). Its pathway is nitrogen metabolism; urea degradation; CO(2) and NH(3) from urea (urease route): step 1/1. This chain is Urease subunit gamma, found in Corynebacterium efficiens (strain DSM 44549 / YS-314 / AJ 12310 / JCM 11189 / NBRC 100395).